We begin with the raw amino-acid sequence, 183 residues long: Ribonuclease H (183 aa).

One can recognise an RNase H type-1 domain in the interval 2-151 (SQARFIAFSD…VDQLAQAAAR (150 aa)). The Mg(2+) site is built by D11, E57, D79, and D143.

It belongs to the RNase H family. Monomer. Mg(2+) is required as a cofactor.

It is found in the cytoplasm. The enzyme catalyses Endonucleolytic cleavage to 5'-phosphomonoester.. Endonuclease that specifically degrades the RNA of RNA-DNA hybrids. The protein is Ribonuclease H of Anaeromyxobacter dehalogenans (strain 2CP-C).